The sequence spans 36 residues: Insecticidal toxin LaIT1 (36 aa).

2 disulfides stabilise this stretch: Cys11–Cys23 and Cys17–Cys29.

In terms of tissue distribution, expressed by the venom gland.

It localises to the secreted. In terms of biological role, affects the activity of both ryanodine-sensitive calcium-release channels RyR1 and RyR2 with high potency. At lower concentrations the toxin increases full openings of the RyRs, and at higher concentrations it inhibits full openings and induce openings to subconductance levels and reduces the number of full conductance openings. The different actions may be attributed to the toxins binding at different sites on the RyRs, with binding at a high-affinity site mediating the increase in full openings and the induction of subconductance states evoked upon binding to a lower-affinity site. Shows insect lethality against crickets and common cutworms (only shows paralysis against cockroaches), but no toxicity is observed in mice. The protein is Insecticidal toxin LaIT1 of Liocheles australasiae (Dwarf wood scorpion).